Consider the following 166-residue polypeptide: Cyclic pyranopterin monophosphate synthase (166 aa).

Substrate-binding positions include 83–85 (LCH) and 121–122 (ME). D136 is an active-site residue.

This sequence belongs to the MoaC family. As to quaternary structure, homohexamer; trimer of dimers.

The enzyme catalyses (8S)-3',8-cyclo-7,8-dihydroguanosine 5'-triphosphate = cyclic pyranopterin phosphate + diphosphate. It participates in cofactor biosynthesis; molybdopterin biosynthesis. Its function is as follows. Catalyzes the conversion of (8S)-3',8-cyclo-7,8-dihydroguanosine 5'-triphosphate to cyclic pyranopterin monophosphate (cPMP). The sequence is that of Cyclic pyranopterin monophosphate synthase from Rhodospirillum rubrum (strain ATCC 11170 / ATH 1.1.1 / DSM 467 / LMG 4362 / NCIMB 8255 / S1).